Reading from the N-terminus, the 341-residue chain is Probable electron transfer flavoprotein subunit alpha, mitochondrial (341 aa).

285–313 contributes to the FAD binding site; sequence LYIAVGIDGAIQHLAGIKDSKVIAAINRD.

Belongs to the ETF alpha-subunit/FixB family. As to quaternary structure, heterodimer of an alpha and a beta subunit. The cofactor is FAD.

The protein localises to the mitochondrion matrix. In terms of biological role, the electron transfer flavoprotein serves as a specific electron acceptor for several dehydrogenases, including five acyl-CoA dehydrogenases, glutaryl-CoA and sarcosine dehydrogenase. It transfers the electrons to the main mitochondrial respiratory chain via ETF-ubiquinone oxidoreductase (ETF dehydrogenase). The chain is Probable electron transfer flavoprotein subunit alpha, mitochondrial from Schizosaccharomyces pombe (strain 972 / ATCC 24843) (Fission yeast).